The chain runs to 253 residues: Tetraspanin-11 (253 aa).

Transmembrane regions (helical) follow at residues leucine 19 to valine 39, isoleucine 63 to isoleucine 83, leucine 90 to leucine 110, and leucine 220 to leucine 240.

It belongs to the tetraspanin (TM4SF) family.

It localises to the membrane. This is Tetraspanin-11 (TSPAN11) from Bos taurus (Bovine).